A 53-amino-acid chain; its full sequence is UPF0391 membrane protein PC1_0455 (53 aa).

A run of 2 helical transmembrane segments spans residues 4–24 (WGII…GGLA) and 30–47 (AAKI…LSLF).

This sequence belongs to the UPF0391 family.

It is found in the cell membrane. In Pectobacterium carotovorum subsp. carotovorum (strain PC1), this protein is UPF0391 membrane protein PC1_0455.